The chain runs to 385 residues: AA13 family lytic polysaccharide monooxygenase NCU08746 (385 aa).

An N-terminal signal peptide occupies residues 1–18 (MKFSIISVALASAITVDA). H19 contributes to the Cu(2+) binding site. H19 carries the methylhistidine modification. The region spanning 19–248 (HGYLTIPFSR…AQVYLSCADI (230 aa)) is the Chitin-binding type-4 domain. C40 and C43 form a disulfide bridge. N-linked (GlcNAc...) asparagine glycosylation is present at N54. Cystine bridges form between C66–C245, C102–C203, C118–C145, C153–C161, C167–C173, and C181–C192. Residue H109 coordinates Cu(2+). Y242 contacts Cu(2+). One can recognise a CBM20 domain in the interval 278–385 (CTPAATVAVT…ESVAVESSWK (108 aa)). A glycan (N-linked (GlcNAc...) asparagine) is linked at N365.

It belongs to the polysaccharide monooxygenase AA13 family. Cu(2+) is required as a cofactor.

It is found in the secreted. The catalysed reaction is starch + reduced acceptor + O2 = D-glucono-1,5-lactone-terminated malto-oligosaccharides + short-chain malto-oligosaccharides + acceptor + H2O.. In terms of biological role, starch-active lytic polysaccharide monooxygenase that oxidizes the C1 position of starch substrates, but not in cellulose or chitin. Catalysis by LPMOs requires the reduction of the active-site copper from Cu(II) to Cu(I) by a reducing agent and H(2)O(2) or O(2) as a cosubstrate. In Neurospora crassa (strain ATCC 24698 / 74-OR23-1A / CBS 708.71 / DSM 1257 / FGSC 987), this protein is AA13 family lytic polysaccharide monooxygenase NCU08746.